A 338-amino-acid chain; its full sequence is Ketol-acid reductoisomerase (NADP(+)) (338 aa).

The KARI N-terminal Rossmann domain maps to Met-1–Thr-181. NADP(+) contacts are provided by residues Phe-24–Gln-27, Arg-47, Ser-50, Ser-52, and Asp-82–Gln-85. The active site involves His-107. An NADP(+)-binding site is contributed by Gly-133. One can recognise a KARI C-terminal knotted domain in the interval Thr-182–Ile-327. 4 residues coordinate Mg(2+): Asp-190, Glu-194, Glu-226, and Glu-230. Substrate is bound at residue Ser-251.

It belongs to the ketol-acid reductoisomerase family. The cofactor is Mg(2+).

The catalysed reaction is (2R)-2,3-dihydroxy-3-methylbutanoate + NADP(+) = (2S)-2-acetolactate + NADPH + H(+). It catalyses the reaction (2R,3R)-2,3-dihydroxy-3-methylpentanoate + NADP(+) = (S)-2-ethyl-2-hydroxy-3-oxobutanoate + NADPH + H(+). It participates in amino-acid biosynthesis; L-isoleucine biosynthesis; L-isoleucine from 2-oxobutanoate: step 2/4. It functions in the pathway amino-acid biosynthesis; L-valine biosynthesis; L-valine from pyruvate: step 2/4. Functionally, involved in the biosynthesis of branched-chain amino acids (BCAA). Catalyzes an alkyl-migration followed by a ketol-acid reduction of (S)-2-acetolactate (S2AL) to yield (R)-2,3-dihydroxy-isovalerate. In the isomerase reaction, S2AL is rearranged via a Mg-dependent methyl migration to produce 3-hydroxy-3-methyl-2-ketobutyrate (HMKB). In the reductase reaction, this 2-ketoacid undergoes a metal-dependent reduction by NADPH to yield (R)-2,3-dihydroxy-isovalerate. The protein is Ketol-acid reductoisomerase (NADP(+)) of Marinobacter nauticus (strain ATCC 700491 / DSM 11845 / VT8) (Marinobacter aquaeolei).